The sequence spans 244 residues: CTD nuclear envelope phosphatase 1 (244 aa).

The helical transmembrane segment at 7–29 (LLGLRGFVAFAAKLWSFVLYLLR) threads the bilayer. The region spanning 57-224 (SQVKRKVLVL…LNLLPMLDAL (168 aa)) is the FCP1 homology domain.

This sequence belongs to the dullard family. In terms of assembly, interacts with bmpr1a, bmpr1b and bmpr2.

It localises to the membrane. Its subcellular location is the cytoplasm. The protein resides in the perinuclear region. The catalysed reaction is O-phospho-L-seryl-[protein] + H2O = L-seryl-[protein] + phosphate. The enzyme catalyses O-phospho-L-threonyl-[protein] + H2O = L-threonyl-[protein] + phosphate. Its function is as follows. Serine/threonine protein phosphatase that may dephosphorylate and activate lipins. Lipins are phosphatidate phosphatases that catalyze the conversion of phosphatidic acid to diacylglycerol and control the metabolism of fatty acids at different levels. May indirectly modulate the lipid composition of nuclear and/or endoplasmic reticulum membranes and be required for proper nuclear membrane morphology and/or dynamics. May also indirectly regulate the production of lipid droplets and triacylglycerol. Induces neuronal differentiation by antagonizing BMP signaling. Acts both by dephosphorylating BMPR1A and by promoting BMPR2 proteasomal degradation. This Xenopus tropicalis (Western clawed frog) protein is CTD nuclear envelope phosphatase 1 (ctdnep1).